A 391-amino-acid polypeptide reads, in one-letter code: Nicotinate phosphoribosyltransferase (391 aa).

A Phosphohistidine; by autocatalysis modification is found at histidine 216.

Belongs to the NAPRTase family. Transiently phosphorylated on a His residue during the reaction cycle. Phosphorylation strongly increases the affinity for substrates and increases the rate of nicotinate D-ribonucleotide production. Dephosphorylation regenerates the low-affinity form of the enzyme, leading to product release.

The enzyme catalyses nicotinate + 5-phospho-alpha-D-ribose 1-diphosphate + ATP + H2O = nicotinate beta-D-ribonucleotide + ADP + phosphate + diphosphate. It participates in cofactor biosynthesis; NAD(+) biosynthesis; nicotinate D-ribonucleotide from nicotinate: step 1/1. Catalyzes the synthesis of beta-nicotinate D-ribonucleotide from nicotinate and 5-phospho-D-ribose 1-phosphate at the expense of ATP. The chain is Nicotinate phosphoribosyltransferase from Bordetella petrii (strain ATCC BAA-461 / DSM 12804 / CCUG 43448).